The following is a 389-amino-acid chain: MTVLTEGIAPHGGQLINRIATAAEKAEFLALAEKLPRVSLDERALSDLVMIAIGGFSPLKGFMEQDDYEKVVDDMRLINGLPWAIPVTLSVREEVADPLKEGNWIRLDDSEGNFVGVLELTQKYRYNKAHEAVNVYRTDDQKHPGVKVLYEQGEINLAGPIWLLQRDPHPQFPKYQIDPLQSRKMFHEKAWKTIVGFQTRNPIHRAHEYIQKCALEVVDGLFLHPLVGATKSDDVPADVRMRCYEIMMDKYFPQDRVILAINPSAMRYAGPREAIFHAIIRKNYGCTHFIVGRDHAGVGDYYGTYDAQYIFDEFEPGELGIVPMKFEHAFYCTRTSGMATTKTSPSLPEERIHLSGTKVRELLRKGELPPPEFSRPEVAAELIRAMQGS.

It belongs to the sulfate adenylyltransferase family.

The catalysed reaction is sulfate + ATP + H(+) = adenosine 5'-phosphosulfate + diphosphate. It participates in sulfur metabolism; hydrogen sulfide biosynthesis; sulfite from sulfate: step 1/3. The polypeptide is Sulfate adenylyltransferase (Microcystis aeruginosa (strain NIES-843 / IAM M-2473)).